Reading from the N-terminus, the 264-residue chain is Thymidylate synthase (264 aa).

Residues R21 and 126-127 contribute to the dUMP site; that span reads RR. Catalysis depends on C146, which acts as the Nucleophile. DUMP-binding positions include 166-169, N177, and 207-209; these read RSAD and HLY. D169 lines the (6R)-5,10-methylene-5,6,7,8-tetrahydrofolate pocket. A263 serves as a coordination point for (6R)-5,10-methylene-5,6,7,8-tetrahydrofolate.

The protein belongs to the thymidylate synthase family. Bacterial-type ThyA subfamily. In terms of assembly, homodimer.

The protein resides in the cytoplasm. It carries out the reaction dUMP + (6R)-5,10-methylene-5,6,7,8-tetrahydrofolate = 7,8-dihydrofolate + dTMP. The protein operates within pyrimidine metabolism; dTTP biosynthesis. In terms of biological role, catalyzes the reductive methylation of 2'-deoxyuridine-5'-monophosphate (dUMP) to 2'-deoxythymidine-5'-monophosphate (dTMP) while utilizing 5,10-methylenetetrahydrofolate (mTHF) as the methyl donor and reductant in the reaction, yielding dihydrofolate (DHF) as a by-product. This enzymatic reaction provides an intracellular de novo source of dTMP, an essential precursor for DNA biosynthesis. In Rhodopseudomonas palustris (strain ATCC BAA-98 / CGA009), this protein is Thymidylate synthase.